Reading from the N-terminus, the 240-residue chain is Probable septum site-determining protein MinC (240 aa).

The protein belongs to the MinC family. As to quaternary structure, interacts with MinD and FtsZ.

Its function is as follows. Cell division inhibitor that blocks the formation of polar Z ring septums. Rapidly oscillates between the poles of the cell to destabilize FtsZ filaments that have formed before they mature into polar Z rings. Prevents FtsZ polymerization. In Aeromonas hydrophila subsp. hydrophila (strain ATCC 7966 / DSM 30187 / BCRC 13018 / CCUG 14551 / JCM 1027 / KCTC 2358 / NCIMB 9240 / NCTC 8049), this protein is Probable septum site-determining protein MinC.